The primary structure comprises 178 residues: Large ribosomal subunit protein bL25 (178 aa).

This sequence belongs to the bacterial ribosomal protein bL25 family. CTC subfamily. In terms of assembly, part of the 50S ribosomal subunit; part of the 5S rRNA/L5/L18/L25 subcomplex. Contacts the 5S rRNA. Binds to the 5S rRNA independently of L5 and L18.

In terms of biological role, this is one of the proteins that binds to the 5S RNA in the ribosome where it forms part of the central protuberance. This is Large ribosomal subunit protein bL25 from Helicobacter pylori (strain HPAG1).